The chain runs to 377 residues: Chaperone protein DnaJ (377 aa).

The 66-residue stretch at 5–70 (DYYEILGVSK…QKRAAYDQYG (66 aa)) folds into the J domain. The CR-type zinc finger occupies 132–210 (GVTKEIRIPT…CHGHGRVEKT (79 aa)). Zn(2+)-binding residues include cysteine 145, cysteine 148, cysteine 162, cysteine 165, cysteine 184, cysteine 187, cysteine 198, and cysteine 201. CXXCXGXG motif repeat units lie at residues 145 to 152 (CDVCHGSG), 162 to 169 (CPTCHGAG), 184 to 191 (CPHCQGRG), and 198 to 205 (CNKCHGHG).

Belongs to the DnaJ family. Homodimer. Requires Zn(2+) as cofactor.

It is found in the cytoplasm. Functionally, participates actively in the response to hyperosmotic and heat shock by preventing the aggregation of stress-denatured proteins and by disaggregating proteins, also in an autonomous, DnaK-independent fashion. Unfolded proteins bind initially to DnaJ; upon interaction with the DnaJ-bound protein, DnaK hydrolyzes its bound ATP, resulting in the formation of a stable complex. GrpE releases ADP from DnaK; ATP binding to DnaK triggers the release of the substrate protein, thus completing the reaction cycle. Several rounds of ATP-dependent interactions between DnaJ, DnaK and GrpE are required for fully efficient folding. Also involved, together with DnaK and GrpE, in the DNA replication of plasmids through activation of initiation proteins. In Klebsiella pneumoniae (strain 342), this protein is Chaperone protein DnaJ.